The chain runs to 443 residues: D-inositol 3-phosphate glycosyltransferase (443 aa).

H26 contributes to the 1D-myo-inositol 3-phosphate binding site. UDP-N-acetyl-alpha-D-glucosamine-binding positions include 32–33 and G40; that span reads QP. 1D-myo-inositol 3-phosphate-binding positions include 37 to 42, K95, Y128, T152, and R172; that span reads DAGGMN. R246, K251, and Q304 together coordinate UDP-N-acetyl-alpha-D-glucosamine. Mg(2+) is bound by residues Y313, R314, and A316. E326 and E334 together coordinate UDP-N-acetyl-alpha-D-glucosamine. T340 contributes to the Mg(2+) binding site.

This sequence belongs to the glycosyltransferase group 1 family. MshA subfamily. As to quaternary structure, homodimer.

The enzyme catalyses 1D-myo-inositol 3-phosphate + UDP-N-acetyl-alpha-D-glucosamine = 1D-myo-inositol 2-acetamido-2-deoxy-alpha-D-glucopyranoside 3-phosphate + UDP + H(+). Catalyzes the transfer of a N-acetyl-glucosamine moiety to 1D-myo-inositol 3-phosphate to produce 1D-myo-inositol 2-acetamido-2-deoxy-glucopyranoside 3-phosphate in the mycothiol biosynthesis pathway. The chain is D-inositol 3-phosphate glycosyltransferase from Mycobacteroides abscessus (strain ATCC 19977 / DSM 44196 / CCUG 20993 / CIP 104536 / JCM 13569 / NCTC 13031 / TMC 1543 / L948) (Mycobacterium abscessus).